A 70-amino-acid polypeptide reads, in one-letter code: Small ribosomal subunit protein bS21B (70 aa).

Belongs to the bacterial ribosomal protein bS21 family.

The sequence is that of Small ribosomal subunit protein bS21B from Burkholderia thailandensis (strain ATCC 700388 / DSM 13276 / CCUG 48851 / CIP 106301 / E264).